The sequence spans 157 residues: Phosphopantetheine adenylyltransferase (157 aa).

Serine 9 is a binding site for substrate. Residues 9–10 (SF) and histidine 17 contribute to the ATP site. Lysine 41, leucine 74, and lysine 88 together coordinate substrate. Residues 89 to 91 (GLR), glutamate 99, and 123 to 129 (YTHVSSS) each bind ATP.

Belongs to the bacterial CoaD family. In terms of assembly, homohexamer. Requires Mg(2+) as cofactor.

Its subcellular location is the cytoplasm. The enzyme catalyses (R)-4'-phosphopantetheine + ATP + H(+) = 3'-dephospho-CoA + diphosphate. The protein operates within cofactor biosynthesis; coenzyme A biosynthesis; CoA from (R)-pantothenate: step 4/5. In terms of biological role, reversibly transfers an adenylyl group from ATP to 4'-phosphopantetheine, yielding dephospho-CoA (dPCoA) and pyrophosphate. The protein is Phosphopantetheine adenylyltransferase of Micrococcus luteus (strain ATCC 4698 / DSM 20030 / JCM 1464 / CCM 169 / CCUG 5858 / IAM 1056 / NBRC 3333 / NCIMB 9278 / NCTC 2665 / VKM Ac-2230) (Micrococcus lysodeikticus).